A 348-amino-acid polypeptide reads, in one-letter code: Dihydroorotase (348 aa).

Positions 14 and 16 each coordinate Zn(2+). Substrate contacts are provided by residues 16 to 18 (HLR) and Asn-42. Zn(2+) contacts are provided by Lys-100, His-137, and His-175. An N6-carboxylysine modification is found at Lys-100. His-137 lines the substrate pocket. Residue Leu-220 participates in substrate binding. Asp-248 contacts Zn(2+). Residue Asp-248 is part of the active site. The substrate site is built by His-252 and Ala-264.

The protein belongs to the metallo-dependent hydrolases superfamily. DHOase family. Class II DHOase subfamily. Homodimer. Requires Zn(2+) as cofactor.

The enzyme catalyses (S)-dihydroorotate + H2O = N-carbamoyl-L-aspartate + H(+). Its pathway is pyrimidine metabolism; UMP biosynthesis via de novo pathway; (S)-dihydroorotate from bicarbonate: step 3/3. In terms of biological role, catalyzes the reversible cyclization of carbamoyl aspartate to dihydroorotate. The chain is Dihydroorotase from Synechococcus sp. (strain CC9605).